The sequence spans 298 residues: Bifunctional protein FolD (298 aa).

Residues 166–168 (GRS), serine 191, and isoleucine 232 contribute to the NADP(+) site.

Belongs to the tetrahydrofolate dehydrogenase/cyclohydrolase family. Homodimer.

It carries out the reaction (6R)-5,10-methylene-5,6,7,8-tetrahydrofolate + NADP(+) = (6R)-5,10-methenyltetrahydrofolate + NADPH. The enzyme catalyses (6R)-5,10-methenyltetrahydrofolate + H2O = (6R)-10-formyltetrahydrofolate + H(+). It functions in the pathway one-carbon metabolism; tetrahydrofolate interconversion. Functionally, catalyzes the oxidation of 5,10-methylenetetrahydrofolate to 5,10-methenyltetrahydrofolate and then the hydrolysis of 5,10-methenyltetrahydrofolate to 10-formyltetrahydrofolate. This Parvibaculum lavamentivorans (strain DS-1 / DSM 13023 / NCIMB 13966) protein is Bifunctional protein FolD.